Consider the following 229-residue polypeptide: Chloride conductance regulatory protein ICln (229 aa).

Belongs to the pICln (TC 1.A.47) family. In terms of assembly, homooligomer.

It localises to the cytoplasm. The protein localises to the nucleus. Its function is as follows. May participate in cellular volume control by activation of a swelling-induced chloride conductance pathway. In Arabidopsis thaliana (Mouse-ear cress), this protein is Chloride conductance regulatory protein ICln.